A 232-amino-acid polypeptide reads, in one-letter code: Ribonuclease P protein component 3 (232 aa).

The protein belongs to the eukaryotic/archaeal RNase P protein component 3 family. In terms of assembly, consists of a catalytic RNA component and at least 4-5 protein subunits.

It is found in the cytoplasm. It carries out the reaction Endonucleolytic cleavage of RNA, removing 5'-extranucleotides from tRNA precursor.. Its function is as follows. Part of ribonuclease P, a protein complex that generates mature tRNA molecules by cleaving their 5'-ends. This Halobacterium salinarum (strain ATCC 29341 / DSM 671 / R1) protein is Ribonuclease P protein component 3.